The chain runs to 450 residues: uncharacterized protein (450 aa).

The region spanning 1-58 (MQKNQIVDLEITDLSYEAMGVAHLDGMTVFVNNALPGEIVSAKLLKVKKNFAFAKIEK) is the TRAM domain. The S-adenosyl-L-methionine site is built by Gln-280, Tyr-309, Glu-330, and Asp-378. The active-site Nucleophile is the Cys-405.

This sequence belongs to the class I-like SAM-binding methyltransferase superfamily. RNA M5U methyltransferase family.

This is an uncharacterized protein from Lactobacillus johnsonii (strain CNCM I-12250 / La1 / NCC 533).